Here is a 129-residue protein sequence, read N- to C-terminus: NADH-quinone oxidoreductase subunit A (129 aa).

A run of 3 helical transmembrane segments spans residues 6–26 (FWPF…IVGF), 63–83 (LVAV…AWAV), and 89–109 (GWIG…ALIY).

It belongs to the complex I subunit 3 family. In terms of assembly, NDH-1 is composed of 14 different subunits. Subunits NuoA, H, J, K, L, M, N constitute the membrane sector of the complex.

It is found in the cell inner membrane. It carries out the reaction a quinone + NADH + 5 H(+)(in) = a quinol + NAD(+) + 4 H(+)(out). In terms of biological role, NDH-1 shuttles electrons from NADH, via FMN and iron-sulfur (Fe-S) centers, to quinones in the respiratory chain. The immediate electron acceptor for the enzyme in this species is believed to be ubiquinone. Couples the redox reaction to proton translocation (for every two electrons transferred, four hydrogen ions are translocated across the cytoplasmic membrane), and thus conserves the redox energy in a proton gradient. This Nitrosococcus oceani (strain ATCC 19707 / BCRC 17464 / JCM 30415 / NCIMB 11848 / C-107) protein is NADH-quinone oxidoreductase subunit A.